The following is a 1004-amino-acid chain: 2-oxoglutarate dehydrogenase E1 component (1004 aa).

It belongs to the alpha-ketoglutarate dehydrogenase family. In terms of assembly, homodimer. Part of the 2-oxoglutarate dehydrogenase (OGDH) complex composed of E1 (2-oxoglutarate dehydrogenase), E2 (dihydrolipoamide succinyltransferase) and E3 (dihydrolipoamide dehydrogenase); the complex contains multiple copies of the three enzymatic components (E1, E2 and E3). Requires thiamine diphosphate as cofactor.

It carries out the reaction N(6)-[(R)-lipoyl]-L-lysyl-[protein] + 2-oxoglutarate + H(+) = N(6)-[(R)-S(8)-succinyldihydrolipoyl]-L-lysyl-[protein] + CO2. Its function is as follows. E1 component of the 2-oxoglutarate dehydrogenase (OGDH) complex which catalyzes the decarboxylation of 2-oxoglutarate, the first step in the conversion of 2-oxoglutarate to succinyl-CoA and CO(2). The polypeptide is 2-oxoglutarate dehydrogenase E1 component (Brucella melitensis biotype 2 (strain ATCC 23457)).